Here is a 298-residue protein sequence, read N- to C-terminus: Possible hemolysin C (298 aa).

2 CBS domains span residues 80-141 (MVPR…QNGC) and 145-202 (LIRK…IDDE).

The protein belongs to the UPF0053 family. Hemolysin C subfamily.

In Rickettsia canadensis (strain McKiel), this protein is Possible hemolysin C (tlyC).